The primary structure comprises 291 residues: Elongation factor Ts (291 aa).

An involved in Mg(2+) ion dislocation from EF-Tu region spans residues 79–82; that stretch reads TDFV.

It belongs to the EF-Ts family.

The protein localises to the cytoplasm. In terms of biological role, associates with the EF-Tu.GDP complex and induces the exchange of GDP to GTP. It remains bound to the aminoacyl-tRNA.EF-Tu.GTP complex up to the GTP hydrolysis stage on the ribosome. The polypeptide is Elongation factor Ts (Dinoroseobacter shibae (strain DSM 16493 / NCIMB 14021 / DFL 12)).